We begin with the raw amino-acid sequence, 351 residues long: Outer membrane porin protein 32 (351 aa).

The N-terminal stretch at 1–19 is a signal peptide; sequence MKKSLIALAVLAASGAAMA. Pyrrolidone carboxylic acid is present on Gln20.

To bacterial outer membrane proteins and porins. Homotrimer.

Its subcellular location is the cell outer membrane. In terms of biological role, forms anion selective channels. In Delftia acidovorans (Pseudomonas acidovorans), this protein is Outer membrane porin protein 32 (omp32).